The primary structure comprises 635 residues: Extracellular metalloproteinase 9 (635 aa).

An N-terminal signal peptide occupies residues 1 to 19 (MHGLLLAAGLLTLPLRALA). Residues 20 to 246 (HPGHQSTSIL…IHGVTDYVAD (227 aa)) constitute a propeptide that is removed on maturation. Asparagine 274 carries N-linked (GlcNAc...) asparagine glycosylation. Positions 279–307 (TWHSDGNTRYPTTRGNNGIAQDNPSGGTG) are disordered. The N-linked (GlcNAc...) asparagine glycan is linked to asparagine 413. Position 430 (histidine 430) interacts with Zn(2+). Glutamate 431 is an active-site residue. Zn(2+) is bound at residue histidine 434. The N-linked (GlcNAc...) asparagine glycan is linked to asparagine 475.

Belongs to the peptidase M36 family. Zn(2+) is required as a cofactor.

It localises to the secreted. Functionally, secreted metalloproteinase that allows assimilation of proteinaceous substrates. This is Extracellular metalloproteinase 9 (MEP9) from Uncinocarpus reesii (strain UAMH 1704).